A 61-amino-acid polypeptide reads, in one-letter code: Small ribosomal subunit protein uS14 (61 aa).

Residues C24, C27, C40, and C43 each contribute to the Zn(2+) site.

Belongs to the universal ribosomal protein uS14 family. Zinc-binding uS14 subfamily. In terms of assembly, part of the 30S ribosomal subunit. Contacts proteins S3 and S10. Zn(2+) serves as cofactor.

Binds 16S rRNA, required for the assembly of 30S particles and may also be responsible for determining the conformation of the 16S rRNA at the A site. This chain is Small ribosomal subunit protein uS14, found in Clostridium beijerinckii (strain ATCC 51743 / NCIMB 8052) (Clostridium acetobutylicum).